The following is a 199-amino-acid chain: MIGWLHGQIIDKHQPGKLVLDVNGVGYDVETSLNTFFQIENGNQPVGLHIHTIVREDALLLYGFLDKEERSLFRSLIKVNGVGPKLAMTVLSSISPKEFIQCIHQENAALLTKLPGIGKKTAERLVVEMRDSIKQFDGSVSDTFQKQAGSTHSQQEAISALEALGYKPQEAWKVMNKIDNGNKSCEQLIREALQILSSR.

The segment at 1-65 (MIGWLHGQII…EDALLLYGFL (65 aa)) is domain I. A domain II region spans residues 66 to 144 (DKEERSLFRS…QFDGSVSDTF (79 aa)). The flexible linker stretch occupies residues 144 to 148 (FQKQA). Residues 149–199 (GSTHSQQEAISALEALGYKPQEAWKVMNKIDNGNKSCEQLIREALQILSSR) form a domain III region.

The protein belongs to the RuvA family. As to quaternary structure, homotetramer. Forms an RuvA(8)-RuvB(12)-Holliday junction (HJ) complex. HJ DNA is sandwiched between 2 RuvA tetramers; dsDNA enters through RuvA and exits via RuvB. An RuvB hexamer assembles on each DNA strand where it exits the tetramer. Each RuvB hexamer is contacted by two RuvA subunits (via domain III) on 2 adjacent RuvB subunits; this complex drives branch migration. In the full resolvosome a probable DNA-RuvA(4)-RuvB(12)-RuvC(2) complex forms which resolves the HJ.

It localises to the cytoplasm. In terms of biological role, the RuvA-RuvB-RuvC complex processes Holliday junction (HJ) DNA during genetic recombination and DNA repair, while the RuvA-RuvB complex plays an important role in the rescue of blocked DNA replication forks via replication fork reversal (RFR). RuvA specifically binds to HJ cruciform DNA, conferring on it an open structure. The RuvB hexamer acts as an ATP-dependent pump, pulling dsDNA into and through the RuvAB complex. HJ branch migration allows RuvC to scan DNA until it finds its consensus sequence, where it cleaves and resolves the cruciform DNA. In Legionella pneumophila subsp. pneumophila (strain Philadelphia 1 / ATCC 33152 / DSM 7513), this protein is Holliday junction branch migration complex subunit RuvA.